The sequence spans 261 residues: Cytochrome c oxidase subunit 3 (261 aa).

Residues 1-15 (MTHQTHAYHMVNPSP) are Mitochondrial matrix-facing. Residues 16-34 (WPLTGALSALLMTSGLTMW) traverse the membrane as a helical segment. The Mitochondrial intermembrane portion of the chain corresponds to 35 to 40 (FHFNST). Residues 41–66 (ILLMLGLTTNMLTMYQWWRDIIREST) form a helical membrane-spanning segment. At 67–72 (FQGHHT) the chain is on the mitochondrial matrix side. A helical transmembrane segment spans residues 73-105 (PVVQKGLRYGMILFIISEVLFFTGFFWAFYHSS). Residues 106–128 (LAPTPELGGCWPPTGIHPLNPLE) are Mitochondrial intermembrane-facing. The chain crosses the membrane as a helical span at residues 129–152 (VPLLNTSVLLASGVSITWAHHSLM). The Mitochondrial matrix segment spans residues 153-155 (EGH). The helical transmembrane segment at 156-183 (RNHMLQALFITIALGVYFTLLQASEYYE) threads the bilayer. Over 184-190 (APFTISD) the chain is Mitochondrial intermembrane. A helical transmembrane segment spans residues 191 to 223 (GVYGSTFFVATGFHGLHVIIGSTFLIVCFFRQL). The Mitochondrial matrix portion of the chain corresponds to 224 to 232 (KFHFTSSHH). The helical transmembrane segment at 233–256 (FGFEAAAWYWHFVDVVWLFLYVSI) threads the bilayer. Residues 257–261 (YWWGS) are Mitochondrial intermembrane-facing.

Belongs to the cytochrome c oxidase subunit 3 family. Component of the cytochrome c oxidase (complex IV, CIV), a multisubunit enzyme composed of 14 subunits. The complex is composed of a catalytic core of 3 subunits MT-CO1, MT-CO2 and MT-CO3, encoded in the mitochondrial DNA, and 11 supernumerary subunits COX4I, COX5A, COX5B, COX6A, COX6B, COX6C, COX7A, COX7B, COX7C, COX8 and NDUFA4, which are encoded in the nuclear genome. The complex exists as a monomer or a dimer and forms supercomplexes (SCs) in the inner mitochondrial membrane with NADH-ubiquinone oxidoreductase (complex I, CI) and ubiquinol-cytochrome c oxidoreductase (cytochrome b-c1 complex, complex III, CIII), resulting in different assemblies (supercomplex SCI(1)III(2)IV(1) and megacomplex MCI(2)III(2)IV(2)).

The protein localises to the mitochondrion inner membrane. It carries out the reaction 4 Fe(II)-[cytochrome c] + O2 + 8 H(+)(in) = 4 Fe(III)-[cytochrome c] + 2 H2O + 4 H(+)(out). Functionally, component of the cytochrome c oxidase, the last enzyme in the mitochondrial electron transport chain which drives oxidative phosphorylation. The respiratory chain contains 3 multisubunit complexes succinate dehydrogenase (complex II, CII), ubiquinol-cytochrome c oxidoreductase (cytochrome b-c1 complex, complex III, CIII) and cytochrome c oxidase (complex IV, CIV), that cooperate to transfer electrons derived from NADH and succinate to molecular oxygen, creating an electrochemical gradient over the inner membrane that drives transmembrane transport and the ATP synthase. Cytochrome c oxidase is the component of the respiratory chain that catalyzes the reduction of oxygen to water. Electrons originating from reduced cytochrome c in the intermembrane space (IMS) are transferred via the dinuclear copper A center (CU(A)) of subunit 2 and heme A of subunit 1 to the active site in subunit 1, a binuclear center (BNC) formed by heme A3 and copper B (CU(B)). The BNC reduces molecular oxygen to 2 water molecules using 4 electrons from cytochrome c in the IMS and 4 protons from the mitochondrial matrix. This chain is Cytochrome c oxidase subunit 3 (MT-CO3), found in Tragelaphus strepsiceros (Greater kudu).